A 77-amino-acid chain; its full sequence is MATGTPAHELRELNNEELTTRLREAKEELFNLRFQAATGQLTNNRRLGVVKRDIARIYTVLRERELGLSTNPGGDAA.

It belongs to the universal ribosomal protein uL29 family.

In Corynebacterium jeikeium (strain K411), this protein is Large ribosomal subunit protein uL29.